The primary structure comprises 142 residues: Putative pre-16S rRNA nuclease (142 aa).

This sequence belongs to the YqgF nuclease family.

Its subcellular location is the cytoplasm. Could be a nuclease involved in processing of the 5'-end of pre-16S rRNA. This is Putative pre-16S rRNA nuclease from Lactobacillus acidophilus (strain ATCC 700396 / NCK56 / N2 / NCFM).